A 100-amino-acid chain; its full sequence is Urease subunit gamma (100 aa).

This sequence belongs to the urease gamma subunit family. Heterotrimer of UreA (gamma), UreB (beta) and UreC (alpha) subunits. Three heterotrimers associate to form the active enzyme.

Its subcellular location is the cytoplasm. The catalysed reaction is urea + 2 H2O + H(+) = hydrogencarbonate + 2 NH4(+). It functions in the pathway nitrogen metabolism; urea degradation; CO(2) and NH(3) from urea (urease route): step 1/1. The polypeptide is Urease subunit gamma (Magnetococcus marinus (strain ATCC BAA-1437 / JCM 17883 / MC-1)).